Reading from the N-terminus, the 202-residue chain is Translation initiation factor IF-3 (202 aa).

The protein belongs to the IF-3 family. As to quaternary structure, monomer.

It is found in the cytoplasm. In terms of biological role, IF-3 binds to the 30S ribosomal subunit and shifts the equilibrium between 70S ribosomes and their 50S and 30S subunits in favor of the free subunits, thus enhancing the availability of 30S subunits on which protein synthesis initiation begins. The polypeptide is Translation initiation factor IF-3 (Prochlorococcus marinus (strain NATL2A)).